Reading from the N-terminus, the 623-residue chain is Kelch-like protein diablo (623 aa).

Positions 1–54 (MGDLPGSGSTAQPRDAAVTGTGGNSTAGGGSSVGSTAVDRPPSPARLSHTSEKH) are disordered. T19 carries the phosphothreonine modification. A compositionally biased stretch (gly residues) spans 20–32 (GTGGNSTAGGGSS). The BTB domain maps to 72-139 (CDVVLNVGGR…CYTAHIIVEE (68 aa)). Positions 174–276 (CLGIRAFADT…SPKFLVGTVG (103 aa)) constitute a BACK domain. Kelch repeat units follow at residues 323–369 (VLFA…VLND), 371–417 (LYAV…VLDG), 418–464 (FLYA…VLGG), 466–511 (LYAI…VFNN), 513–558 (IYAV…VVNG), and 559–605 (QLYA…VMRA).

It participates in protein modification; protein ubiquitination. Its function is as follows. Probable substrate-specific adapter of an E3 ubiquitin-protein ligase complex which mediates the ubiquitination and subsequent proteasomal degradation of target proteins. May have a role in synapse differentiation and growth. The protein is Kelch-like protein diablo of Drosophila melanogaster (Fruit fly).